The sequence spans 38 residues: Mating hormone A-factor 2 (38 aa).

The span at M1–T12 shows a compositional bias: polar residues. The segment at M1 to K20 is disordered. A propeptide spanning residues M1–N23 is cleaved from the precursor. C35 bears the Cysteine methyl ester mark. C35 carries the S-farnesyl cysteine lipid modification. The propeptide at V36–A38 is removed in mature form.

Its subcellular location is the cell membrane. Its function is as follows. The active factor is excreted into the culture medium by haploid cells of the A mating type and acts on cells of the opposite mating type (type alpha). It mediates the conjugation process between the two types by inhibiting the initiation of DNA synthesis in type alpha cells and synchronizing them with type A. This Saccharomyces cerevisiae (strain ATCC 204508 / S288c) (Baker's yeast) protein is Mating hormone A-factor 2 (MFA2).